The sequence spans 91 residues: MIKNSFISVIPQEDKKRKRGGSVEFQVFNFTNKIRILTSHLELHRKDYSSQRGLRKILGKRQRLLAYLSKKNRVRYKELIGQLDIREPKTR.

Belongs to the universal ribosomal protein uS15 family. In terms of assembly, part of the 30S ribosomal subunit.

The protein localises to the plastid. The protein resides in the chloroplast. The chain is Small ribosomal subunit protein uS15c (rps15) from Ceratophyllum demersum (Rigid hornwort).